The primary structure comprises 264 residues: Undecaprenyl-diphosphatase (264 aa).

A run of 7 helical transmembrane segments spans residues 38–58, 75–95, 106–126, 136–156, 181–201, 217–237, and 242–262; these read RSDF…VLVF, REYV…GLVV, VSPV…VEAY, VTWT…VFPG, FVFL…FLEM, VAFL…MGYI, and FTAF…WLPS.

This sequence belongs to the UppP family.

The protein localises to the cell membrane. It catalyses the reaction di-trans,octa-cis-undecaprenyl diphosphate + H2O = di-trans,octa-cis-undecaprenyl phosphate + phosphate + H(+). Functionally, catalyzes the dephosphorylation of undecaprenyl diphosphate (UPP). Confers resistance to bacitracin. This chain is Undecaprenyl-diphosphatase, found in Stenotrophomonas maltophilia (strain K279a).